Consider the following 265-residue polypeptide: Mlc titration factor A (265 aa).

Zn(2+)-binding residues include histidine 111, histidine 148, histidine 152, and glutamate 211.

It belongs to the MtfA family. As to quaternary structure, interacts with Mlc. The cofactor is Zn(2+).

It localises to the cytoplasm. Involved in the modulation of the activity of the glucose-phosphotransferase system (glucose-PTS). Interacts with the transcriptional repressor Mlc, preventing its interaction with DNA and leading to the modulation of expression of genes regulated by Mlc, including ptsG, which encodes the PTS system glucose-specific EIICB component. Functionally, shows zinc-dependent metallopeptidase activity. The protein is Mlc titration factor A of Pectobacterium atrosepticum (strain SCRI 1043 / ATCC BAA-672) (Erwinia carotovora subsp. atroseptica).